The primary structure comprises 446 residues: D(1A) dopamine receptor (446 aa).

The Extracellular segment spans residues 1-22; sequence MPLNDTTMDRRGLVVERDFSFR. A glycan (N-linked (GlcNAc...) asparagine) is linked at Asn4. The helical transmembrane segment at 23–48 threads the bilayer; that stretch reads ILTACFLSLLILSTLLGNTLVCAAVI. Residues 49–59 lie on the Cytoplasmic side of the membrane; it reads RFRHLRSKVTN. The helical transmembrane segment at 60 to 86 threads the bilayer; sequence FFVISLAVSDLLVAVLVMPWKAVAEIA. The Extracellular portion of the chain corresponds to 87–95; that stretch reads GFWPFGSFC. Cys95 and Cys185 are oxidised to a cystine. Residues 96–118 form a helical membrane-spanning segment; that stretch reads NIWVAFDIMCSTASILNLCVISV. Residues 119 to 137 are Cytoplasmic-facing; sequence DRYWAISSPFRYERKMTPK. A helical transmembrane segment spans residues 138–162; the sequence is AAFILISVAWTLSVLISFIPVQLNW. Residues 163 to 191 lie on the Extracellular side of the membrane; it reads HKARPLSSPDGNVSSQDETMDNCDSSLSR. A helical transmembrane segment spans residues 192–217; that stretch reads TYAISSSLISFYIPVAIMIVTYTRIY. At 218-271 the chain is on the cytoplasmic side; it reads RIAQKQIRRISALERAAVHAKNCQNTTGNGANVECSQPESSFKMSFKRETKVLK. Residues 272-298 traverse the membrane as a helical segment; the sequence is TLSVIMGVFVCCWLPFFILNCMVPFCE. Over 299–315 the chain is Extracellular; that stretch reads SDLPSGETKPFCIDSIT. A helical membrane pass occupies residues 316–340; that stretch reads FDVFVWFGWANSSLNPIIYAFNADF. Residues 341–446 are Cytoplasmic-facing; that stretch reads RKAFSTLLGC…PITQNGQHKT (106 aa). S-palmitoyl cysteine attachment occurs at residues Cys350 and Cys354.

The protein belongs to the G-protein coupled receptor 1 family. Interacts with DNAJC14 via its C-terminus.

The protein resides in the cell membrane. The protein localises to the endoplasmic reticulum membrane. Its subcellular location is the cell projection. It localises to the cilium membrane. It is found in the dendrite. The protein resides in the dendritic spine. Its function is as follows. This is one of the five types (D1 to D5) of receptors for dopamine. The activity of this receptor is mediated by G proteins which activate adenylyl cyclase. This is D(1A) dopamine receptor (DRD1) from Didelphis virginiana (North American opossum).